Reading from the N-terminus, the 135-residue chain is Ribosome-binding factor A (135 aa).

The disordered stretch occupies residues 115–135 (VNEDKRKQQDSGREEDQAGEE). The segment covering 116-135 (NEDKRKQQDSGREEDQAGEE) has biased composition (basic and acidic residues).

Belongs to the RbfA family. As to quaternary structure, monomer. Binds 30S ribosomal subunits, but not 50S ribosomal subunits or 70S ribosomes.

It localises to the cytoplasm. In terms of biological role, one of several proteins that assist in the late maturation steps of the functional core of the 30S ribosomal subunit. Associates with free 30S ribosomal subunits (but not with 30S subunits that are part of 70S ribosomes or polysomes). Required for efficient processing of 16S rRNA. May interact with the 5'-terminal helix region of 16S rRNA. This Vibrio campbellii (strain ATCC BAA-1116) protein is Ribosome-binding factor A.